An 863-amino-acid chain; its full sequence is Dynamin-3 (863 aa).

The region spanning 28-294 is the Dynamin-type G domain; it reads LLELPQIAVV…LTNHIRDTLP (267 aa). The G1 motif stretch occupies residues 38–45; it reads GGQSAGKS. 38-46 contacts GTP; sequence GGQSAGKSS. The segment at 64–66 is G2 motif; the sequence is VTR. Residues 136 to 139 form a G3 motif region; sequence DLPG. The interval 205 to 208 is G4 motif; sequence TKLD. 205 to 211 provides a ligand contact to GTP; it reads TKLDLMD. Tyr231 carries the phosphotyrosine modification. A G5 motif region spans residues 235 to 238; it reads VNRS. 236–239 is a binding site for GTP; the sequence is NRSQ. Lys299 bears the N6-acetyllysine mark. In terms of domain architecture, PH spans 515 to 621; sequence QVIRKGWLTV…WKASLLRAGV (107 aa). Tyr593 is subject to Phosphotyrosine. Lys594 is subject to N6-acetyllysine. Disordered regions lie at residues 626–647 and 742–863; these read SVGS…SMDP and ATVS…SLLD. A compositionally biased stretch (polar residues) spans 627 to 642; sequence VGSNKTENDENGQAEN. The 92-residue stretch at 653 to 744 folds into the GED domain; that stretch reads VETIRNLVDS…IIGDINTATV (92 aa). A phosphoserine mark is found at Ser763 and Ser767. 2 stretches are compositionally biased toward pro residues: residues 791–816 and 826–849; these read PAIP…PPFP and PQVP…PSPT. Residue Ser847 is modified to Phosphoserine.

Belongs to the TRAFAC class dynamin-like GTPase superfamily. Dynamin/Fzo/YdjA family.

The protein resides in the cytoplasm. Its subcellular location is the cytoskeleton. It catalyses the reaction GTP + H2O = GDP + phosphate + H(+). In terms of biological role, microtubule-associated force-producing protein involved in producing microtubule bundles and able to bind and hydrolyze GTP. Most probably involved in vesicular trafficking processes, in particular endocytosis. The protein is Dynamin-3 (Dnm3) of Mus musculus (Mouse).